A 268-amino-acid polypeptide reads, in one-letter code: HLA class II histocompatibility antigen, DQ beta 2 chain (268 aa).

Positions 1-32 are cleaved as a signal peptide; the sequence is MSWKMALQIPGGFWAAAVTVMLVMLSTPVAEA. The interval 33 to 126 is beta-1; sequence RDFPKDFLVQ…ELRTTLQRQV (94 aa). Residues 33–229 lie on the Extracellular side of the membrane; it reads RDFPKDFLVQ…RAQSESAQSK (197 aa). 2 cysteine pairs are disulfide-bonded: Cys47/Cys110 and Cys148/Cys204. Asn51 carries an N-linked (GlcNAc...) asparagine glycan. The beta-2 stretch occupies residues 127–229; sequence EPTVTISPSR…RAQSESAQSK (103 aa). Residues 128–216 enclose the Ig-like C1-type domain; it reads PTVTISPSRT…EHPSLQSPIT (89 aa). The helical transmembrane segment at 230-250 threads the bilayer; that stretch reads MLSGIGGFVLGLIFLGLGLII. At 251–268 the chain is on the cytoplasmic side; it reads RHRGQKGPRGPPPAGLLH.

Belongs to the MHC class II family. In terms of assembly, heterodimer of an alpha and a beta subunit; also referred as MHC class II molecule. Dimer formation with HLA-DQA2, but not with HLA-DQA1, is required for efficient exit from the endoplasmic reticulum (ER). In the ER, forms a heterononamer; 3 MHC class II molecules bind to a CD74 homotrimer (also known as invariant chain or HLA class II histocompatibility antigen gamma chain). In the endosomal/lysosomal system; CD74 undergoes sequential degradation by various proteases; leaving a small fragment termed CLIP on each MHC class II molecule. MHC class II molecule interacts with HLA_DM, and HLA_DO in B-cells, in order to release CLIP and facilitate the binding of antigenic peptides. Association with HLA-DMA also occurs in skin Langerhans cells, in post-Golgi compartments. As to expression, restricted to skin Langerhans cells (at protein level).

The protein resides in the cell membrane. It is found in the endoplasmic reticulum membrane. The protein localises to the golgi apparatus. Its subcellular location is the trans-Golgi network membrane. It localises to the endosome membrane. The protein resides in the lysosome membrane. Its function is as follows. Binds peptides derived from antigens that access the endocytic route of antigen presenting cells (APC) and presents them on the cell surface for recognition by the CD4 T-cells. The peptide binding cleft accommodates peptides of 10-30 residues. The peptides presented by MHC class II molecules are generated mostly by degradation of proteins that access the endocytic route, where they are processed by lysosomal proteases and other hydrolases. Exogenous antigens that have been endocytosed by the APC are thus readily available for presentation via MHC II molecules, and for this reason this antigen presentation pathway is usually referred to as exogenous. As membrane proteins on their way to degradation in lysosomes as part of their normal turn-over are also contained in the endosomal/lysosomal compartments, exogenous antigens must compete with those derived from endogenous components. Autophagy is also a source of endogenous peptides, autophagosomes constitutively fuse with MHC class II loading compartments. In addition to APCs, other cells of the gastrointestinal tract, such as epithelial cells, express MHC class II molecules and CD74 and act as APCs, which is an unusual trait of the GI tract. To produce a MHC class II molecule that presents an antigen, three MHC class II molecules (heterodimers of an alpha and a beta chain) associate with a CD74 trimer in the ER to form a heterononamer. Soon after the entry of this complex into the endosomal/lysosomal system where antigen processing occurs, CD74 undergoes a sequential degradation by various proteases, including CTSS and CTSL, leaving a small fragment termed CLIP (class-II-associated invariant chain peptide). The removal of CLIP is facilitated by HLA-DM via direct binding to the alpha-beta-CLIP complex so that CLIP is released. HLA-DM stabilizes MHC class II molecules until primary high affinity antigenic peptides are bound. The MHC II molecule bound to a peptide is then transported to the cell membrane surface. In B-cells, the interaction between HLA-DM and MHC class II molecules is regulated by HLA-DO. Primary dendritic cells (DCs) also to express HLA-DO. Lysosomal microenvironment has been implicated in the regulation of antigen loading into MHC II molecules, increased acidification produces increased proteolysis and efficient peptide loading. The chain is HLA class II histocompatibility antigen, DQ beta 2 chain (HLA-DQB2) from Homo sapiens (Human).